A 447-amino-acid polypeptide reads, in one-letter code: tRNA (guanine(37)-N(1))-methyltransferase (447 aa).

Residues His241, 285 to 286 (DL), and 313 to 314 (DV) each bind S-adenosyl-L-methionine.

The protein belongs to the class I-like SAM-binding methyltransferase superfamily. TRM5/TYW2 family. Monomer.

The protein resides in the mitochondrion matrix. The protein localises to the nucleus. Its subcellular location is the cytoplasm. It catalyses the reaction guanosine(37) in tRNA + S-adenosyl-L-methionine = N(1)-methylguanosine(37) in tRNA + S-adenosyl-L-homocysteine + H(+). Specifically methylates the N1 position of guanosine-37 in various cytoplasmic and mitochondrial tRNAs. Methylation is not dependent on the nature of the nucleoside 5' of the target nucleoside. This is the first step in the biosynthesis of wybutosine (yW), a modified base adjacent to the anticodon of tRNAs and required for accurate decoding. This Giardia intestinalis (strain ATCC 50803 / WB clone C6) (Giardia lamblia) protein is tRNA (guanine(37)-N(1))-methyltransferase.